The chain runs to 363 residues: Probable tRNA pseudouridine synthase D (363 aa).

Aspartate 82 acts as the Nucleophile in catalysis. The TRUD domain maps to 151–363 (YLPAYIGYQR…IARTDPRLFT (213 aa)).

Belongs to the pseudouridine synthase TruD family.

It carries out the reaction uridine(13) in tRNA = pseudouridine(13) in tRNA. Its function is as follows. Could be responsible for synthesis of pseudouridine from uracil-13 in transfer RNAs. The polypeptide is Probable tRNA pseudouridine synthase D (Sulfurisphaera tokodaii (strain DSM 16993 / JCM 10545 / NBRC 100140 / 7) (Sulfolobus tokodaii)).